We begin with the raw amino-acid sequence, 252 residues long: ATP synthase subunit a, chloroplastic (252 aa).

Helical transmembrane passes span 41-61 (GQVL…TLLA), 100-120 (VPFL…GALL), 138-158 (DINT…YAGI), 204-224 (LIVG…LMLL), and 225-245 (GVFT…AYIG).

This sequence belongs to the ATPase A chain family. F-type ATPases have 2 components, CF(1) - the catalytic core - and CF(0) - the membrane proton channel. CF(1) has five subunits: alpha(3), beta(3), gamma(1), delta(1), epsilon(1). CF(0) has four main subunits: a, b, b' and c.

Its subcellular location is the plastid. The protein resides in the chloroplast thylakoid membrane. Key component of the proton channel; it plays a direct role in the translocation of protons across the membrane. In Oedogonium cardiacum (Filamentous green alga), this protein is ATP synthase subunit a, chloroplastic.